The primary structure comprises 1514 residues: MAVEGSTITSRIKNLLRSPSIKLRRSKAGNRREDLSSKVTLEKVLGITVSGGRGLACDPRSGLVAYPAGCVVVLFNPRKHKQHHILNSSRKTITALAFSPDGKYLVTGESGHMPAVRVWDVAEHSQVAELQEHKYGVACVAFSPSAKYIVSVGYQHDMIVNVWAWKKNIVVASNKVSSRVTAVSFSEDCSYFVTAGNRHIKFWYLDDSKTSKVNATVPLLGRSGLLGELRNNLFTDVACGRGKKADSTFCITSSGLLCEFSDRRLLDKWVELRNIDSFTTTVAHCISVSQDYIFCGCADGTVRLFNPSNLHFLSTLPRPHALGTDIASVTEASRLFSGVANARYPDTIALTFDPTNQWLSCVYNDHSIYVWDVRDPKKVGKVYSALYHSSCVWSVEVYPEVKDSNQACLPPSSFITCSSDNTIRLWNTESSGVHGSTLHRNILSSDLIKIIYVDGNTQALLDTELPGGDKADASLLDPRVGIRSVCVSPNGQHLASGDRMGTLRVHELQSLSEMLKVEAHDSEILCLEYSKPDTGLKLLASASRDRLIHVLDAGREYSLQQTLDEHSSSITAVKFAASDGQVRMISCGADKSIYFRTAQKSGDGVQFTRTHHVVRKTTLYDMDVEPSWKYTAIGCQDRNIRIFNISSGKQKKLFKGSQGEDGTLIKVQTDPSGIYIATSCSDKNLSIFDFSSGECVATMFGHSEIVTGMKFSNDCKHLISVSGDSCIFVWRLSSEMTISMRQRLAELRQRQRGGKQQGPSSPQRASGPNRHQAPSMLSPGPALSSDSDKEGEDEGTEEELPALPVLAKSTKKALASVPSPALPRSLSHWEMSRAQESVGFLDPAPAANPGPRRRGRWVQPGVELSVRSMLDLRQLETLAPSLQDPSQDSLAIIPSGPRKHGQEALETSLTSQNEKPPRPQASQPCSYPHIIRLLSQEEGVFAQDLEPAPIEDGIVYPEPSDNPTMDTSEFQVQAPARGTLGRVYPGSRSSEKHSPDSACSVDYSSSCLSSPEHPTEDSESTEPLSVDGISSDLEEPAEGDEEEEEEEGGMGPYGLQEGSPQTPDQEQFLKQHFETLASGAAPGAPVQVPERSESRSISSRFLLQVQTRPLREPSPSSSSLALMSRPAQVPQASGEQPRGNGANPPGAPPEVEPSSGNPSPQQAASVLLPRCRLNPDSSWAPKRVATASPFSGLQKAQSVHSLVPQERHEASLQAPSPGALLSREIEAQDGLGSLPPADGRPSRPHSYQNPTTSSMAKISRSISVGENLGLVAEPQAHAPIRVSPLSKLALPSRAHLVLDIPKPLPDRPTLAAFSPVTKGRAPGEAEKPGFPVGLGKAHSTTERWACLGEGTTPKPRTECQAHPGPSSPCAQQLPVSSLFQGPENLQPPPPEKTPNPMECTKPGAALSQDSEPAVSLEQCEQLVAELRGSVRQAVRLYHSVAGCKMPSAEQSRIAQLLRDTFSSVRQELEAVAGAVLSSPGSSPGAVGAEQTQALLEQYSELLLRAVERRMERKL.

N-acetylalanine is present on alanine 2. WD repeat units lie at residues 88–129 (SSRK…QVAE), 132–173 (EHKY…VVAS), 175–213 (KVSSRVTAVSFSEDCSYFVTAGNRHIKFWYLDDSKTSKV), 276–315 (DSFTTTVAHCISVSQDYIFCGCADGTVRLFNPSNLHFLST), 342–381 (ARYPDTIALTFDPTNQWLSCVYNDHSIYVWDVRDPKKVGK), 387–436 (YHSS…VHGS), 477–516 (DPRVGIRSVCVSPNGQHLASGDRMGTLRVHELQSLSEMLK), 519–561 (AHDS…SLQQ), 565–606 (EHSS…DGVQ), 614–653 (VRKTTLYDMDVEPSWKYTAIGCQDRNIRIFNISSGKQKKL), 659–698 (GEDGTLIKVQTDPSGIYIATSCSDKNLSIFDFSSGECVAT), and 701–740 (GHSEIVTGMKFSNDCKHLISVSGDSCIFVWRLSSEMTISM). Disordered regions lie at residues 748–804 (RQRQ…PALP), 880–925 (PSLQ…SQPC), 951–1256 (EDGI…SSMA), and 1299–1336 (DIPKPLPDRPTLAAFSPVTKGRAPGEAEKPGFPVGLGK). Residues 789-800 (KEGEDEGTEEEL) are compositionally biased toward acidic residues. Polar residues-rich tracts occupy residues 905–925 (LETSLTSQNEKPPRPQASQPC) and 961–971 (DNPTMDTSEFQ). The segment covering 996 to 1011 (DSACSVDYSSSCLSSP) has biased composition (low complexity). Over residues 1032–1048 (DLEEPAEGDEEEEEEEG) the composition is skewed to acidic residues. A compositionally biased stretch (low complexity) spans 1113 to 1126 (PSPSSSSLALMSRP). 2 stretches are compositionally biased toward polar residues: residues 1188-1200 (SPFSGLQKAQSVH) and 1245-1256 (HSYQNPTTSSMA). The residue at position 1198 (serine 1198) is a Phosphoserine.

Can form homodimers (via C-terminus). Interacts (via C-terminus) with WDR62 (via C-terminus). Interacts with MAPK9. Interacts (via N-terminus) with NOD2; the interaction is enhanced in presence of muramyl dipeptide (MDP). Interacts with MAPK10. In terms of tissue distribution, expressed in intestinal mucosa, where it is detected in epithelial cells, endothelial cells, smooth muscle cells and immune cells, such as lymphocytes. Expressed in kidney.

It is found in the cytoplasm. The protein localises to the nucleus. The protein resides in the cytoskeleton. It localises to the spindle pole. Negative regulator of NOD2 function. It down-regulates NOD2-induced processes such as activation of NF-kappa-B signaling, IL8 secretion and antibacterial response. Involved in JNK signaling pathway. This is Mitogen-activated protein kinase-binding protein 1 (MAPKBP1) from Homo sapiens (Human).